Consider the following 290-residue polypeptide: 4-hydroxybenzoate octaprenyltransferase (290 aa).

The next 8 membrane-spanning stretches (helical) occupy residues 23–43 (IGALLLLWPTLWALWVATPGV), 46–66 (LWILAVFVAGVWLMRAAGCVV), 99–119 (LFVVLVLISFLLVLTLNTMTI), 141–161 (LPQVVLGAAFGWSIPMAFAAV), 163–183 (ESVPLSCWLMFLANILWAVAY), 213–233 (LIIGILQIGVLALMAIIGELN), 234–254 (GLGWGYYWSIVVAGALFVYQQ), and 268–288 (AFMNNNYVGLVLFLGLAMSYW).

It belongs to the UbiA prenyltransferase family. Mg(2+) serves as cofactor.

The protein localises to the cell inner membrane. The catalysed reaction is all-trans-octaprenyl diphosphate + 4-hydroxybenzoate = 4-hydroxy-3-(all-trans-octaprenyl)benzoate + diphosphate. The protein operates within cofactor biosynthesis; ubiquinone biosynthesis. Catalyzes the prenylation of para-hydroxybenzoate (PHB) with an all-trans polyprenyl group. Mediates the second step in the final reaction sequence of ubiquinone-8 (UQ-8) biosynthesis, which is the condensation of the polyisoprenoid side chain with PHB, generating the first membrane-bound Q intermediate 3-octaprenyl-4-hydroxybenzoate. This chain is 4-hydroxybenzoate octaprenyltransferase, found in Escherichia coli (strain SE11).